Reading from the N-terminus, the 118-residue chain is Large ribosomal subunit protein bL20 (118 aa).

This sequence belongs to the bacterial ribosomal protein bL20 family.

Binds directly to 23S ribosomal RNA and is necessary for the in vitro assembly process of the 50S ribosomal subunit. It is not involved in the protein synthesizing functions of that subunit. This chain is Large ribosomal subunit protein bL20, found in Azotobacter vinelandii (strain DJ / ATCC BAA-1303).